A 196-amino-acid polypeptide reads, in one-letter code: Ribosome-binding factor A (196 aa).

The protein belongs to the RbfA family. As to quaternary structure, monomer. Binds 30S ribosomal subunits, but not 50S ribosomal subunits or 70S ribosomes.

The protein localises to the cytoplasm. One of several proteins that assist in the late maturation steps of the functional core of the 30S ribosomal subunit. Associates with free 30S ribosomal subunits (but not with 30S subunits that are part of 70S ribosomes or polysomes). Required for efficient processing of 16S rRNA. May interact with the 5'-terminal helix region of 16S rRNA. This is Ribosome-binding factor A from Tropheryma whipplei (strain TW08/27) (Whipple's bacillus).